Here is a 304-residue protein sequence, read N- to C-terminus: UDP-N-acetylenolpyruvoylglucosamine reductase (304 aa).

The FAD-binding PCMH-type domain maps to 34–198 (IGGKADFLVW…LEVVFALQPG (165 aa)). The active site involves arginine 177. The Proton donor role is filled by serine 227. Residue glutamate 297 is part of the active site.

Belongs to the MurB family. It depends on FAD as a cofactor.

It localises to the cytoplasm. The enzyme catalyses UDP-N-acetyl-alpha-D-muramate + NADP(+) = UDP-N-acetyl-3-O-(1-carboxyvinyl)-alpha-D-glucosamine + NADPH + H(+). It functions in the pathway cell wall biogenesis; peptidoglycan biosynthesis. Its function is as follows. Cell wall formation. This Geobacillus thermodenitrificans (strain NG80-2) protein is UDP-N-acetylenolpyruvoylglucosamine reductase.